The sequence spans 1011 residues: Unconventional myosin ID (1011 aa).

Positions 7–690 (AGVQDFVLLD…TLFALEHQRN (684 aa)) constitute a Myosin motor domain. ATP is bound at residue 100–107 (GESGAGKT). Residues 567 to 589 (MADLVVTLLKKEPFYVRCIKPND) are actin-binding. IQ domains are found at residues 694-714 (PHIVTLLQKRVRGWIVRRNFK) and 716-736 (MKAAITIVRAYKAYKLRSYVQ). The 202-residue stretch at 806-1007 (AGRRPYWGQA…EGNIIFEVPA (202 aa)) folds into the TH1 domain.

It belongs to the TRAFAC class myosin-kinesin ATPase superfamily. Myosin family. As to quaternary structure, binds to F-actin. Interacts with arm. Interacts with shg. Interacts with ds (via intracellular region). As to expression, in the embryo, expressed in gastric caeca, midgut cells of the proventriculus, and in the mid and hindgut. In the larval gut brush border, expression is in the terminal web domain. In the adult gut brush border, expression remains in the web domain and has also moved into the microvilli. Also expressed at low levels in follicle cells during oogenesis.

The protein resides in the cytoplasm. It localises to the cell cortex. The protein localises to the cytoskeleton. It is found in the cell membrane. Its subcellular location is the cell junction. The protein resides in the adherens junction. It localises to the cell projection. Unconventional myosin that functions as actin-based motor protein with ATPase activity. Binds to membranes enriched in phosphatidylinositol 4-5-bisphosphate, and can glide along actin filaments when anchored to a lipid bilayer. Generates left-right asymmetry at the level of single cells, organs and the whole body via its interaction with the actin cytoskeleton, both in the embryo and the adult. Normal left-right asymmetry of the larval midgut and hindgut requires expression in the embryonic hindgut epithelium during a critical time period, 10 to 12.75 hours after egg laying. This period corresponds to a late stage of germband retraction, and precedes left-right asymmetric morphogenesis. Expression in segment H1 of the imaginal ring is required at 0 to 24 hours after pupation for changes of cell shape and orientation in the H2 segment, which then gives rise to normal, dextral looping of the adult hindgut. Required during a critical period, 126-132 hours after egg laying, for normal, dextral rotation of the adult male genitalia. Has a double role by promoting dextral rotation in the posterior compartment of segment A8 of the male genital disk, and in repressing sinistral looping in the anterior compartment. The sequence is that of Unconventional myosin ID from Drosophila melanogaster (Fruit fly).